We begin with the raw amino-acid sequence, 93 residues long: Small ribosomal subunit protein uS19 (93 aa).

Residues 72-93 are disordered; the sequence is GEFSPTRTYRGHNKKDKKMQKK. Over residues 80–93 the composition is skewed to basic residues; sequence YRGHNKKDKKMQKK.

The protein belongs to the universal ribosomal protein uS19 family.

In terms of biological role, protein S19 forms a complex with S13 that binds strongly to the 16S ribosomal RNA. The protein is Small ribosomal subunit protein uS19 of Aster yellows witches'-broom phytoplasma (strain AYWB).